The chain runs to 256 residues: Phosphatidylglycerol--prolipoprotein diacylglyceryl transferase 2 (256 aa).

The next 3 membrane-spanning stretches (helical) occupy residues 11 to 31, 46 to 66, and 83 to 103; these read LKIYSYGFMIGLGIICATLLF, FNATILTVISGILGGKILYII, and FGNGFVIYGAIIGGALGIALC. Arg130 provides a ligand contact to a 1,2-diacyl-sn-glycero-3-phospho-(1'-sn-glycerol). The next 3 helical transmembrane spans lie at 142-162, 164-184, and 221-241; these read AETTSSIGIIFPADSLAPAGV, LYPTQIFSSIFDFALGLFLLW, and VGLLSTSQFISIFILIGGILL.

This sequence belongs to the Lgt family.

The protein localises to the cell membrane. It carries out the reaction L-cysteinyl-[prolipoprotein] + a 1,2-diacyl-sn-glycero-3-phospho-(1'-sn-glycerol) = an S-1,2-diacyl-sn-glyceryl-L-cysteinyl-[prolipoprotein] + sn-glycerol 1-phosphate + H(+). Its pathway is protein modification; lipoprotein biosynthesis (diacylglyceryl transfer). In terms of biological role, catalyzes the transfer of the diacylglyceryl group from phosphatidylglycerol to the sulfhydryl group of the N-terminal cysteine of a prolipoprotein, the first step in the formation of mature lipoproteins. This Clostridium perfringens (strain 13 / Type A) protein is Phosphatidylglycerol--prolipoprotein diacylglyceryl transferase 2.